Reading from the N-terminus, the 513-residue chain is Acetylcholine receptor subunit delta (513 aa).

A signal peptide spans 1–18; the sequence is MAVLLALFGALVLSGGLC. Residues 19 to 244 lie on the Extracellular side of the membrane; sequence VNQEERLIHH…ITFYLIIKRK (226 aa). Asn88 and Asn161 each carry an N-linked (GlcNAc...) asparagine glycan. Cys148 and Cys162 are oxidised to a cystine. The next 3 membrane-spanning stretches (helical) occupy residues 245–269, 277–295, and 311–332; these read PLFY…VFYL, MTLV…LLVS, and YLLF…VLNF. Residues 333–467 lie on the Cytoplasmic side of the membrane; the sequence is HFRTPSTHVM…WNRVARTLDR (135 aa). The residue at position 388 (Tyr388) is a Phosphotyrosine; by Tyr-kinases. A helical membrane pass occupies residues 468–490; that stretch reads LCLFLITPMLVVGTLWIFLMGIY.

The protein belongs to the ligand-gated ion channel (TC 1.A.9) family. Acetylcholine receptor (TC 1.A.9.1) subfamily. Pentamer of two alpha chains, and one each of the beta, delta, and gamma chains.

The protein resides in the postsynaptic cell membrane. The protein localises to the cell membrane. It carries out the reaction K(+)(in) = K(+)(out). The catalysed reaction is Na(+)(in) = Na(+)(out). In terms of biological role, after binding acetylcholine, the AChR responds by an extensive change in conformation that affects all subunits and leads to opening of an ion-conducting channel across the plasma membrane. The chain is Acetylcholine receptor subunit delta (CHRND) from Gallus gallus (Chicken).